The sequence spans 359 residues: Aminomethyltransferase (359 aa).

Belongs to the GcvT family. In terms of assembly, the glycine cleavage system is composed of four proteins: P, T, L and H.

The catalysed reaction is N(6)-[(R)-S(8)-aminomethyldihydrolipoyl]-L-lysyl-[protein] + (6S)-5,6,7,8-tetrahydrofolate = N(6)-[(R)-dihydrolipoyl]-L-lysyl-[protein] + (6R)-5,10-methylene-5,6,7,8-tetrahydrofolate + NH4(+). In terms of biological role, the glycine cleavage system catalyzes the degradation of glycine. The sequence is that of Aminomethyltransferase from Pseudoalteromonas atlantica (strain T6c / ATCC BAA-1087).